Consider the following 25-residue polypeptide: Neuromedin-U-25 (25 aa).

Asn25 is subject to Asparagine amide.

The protein belongs to the NmU family.

The protein resides in the secreted. Stimulates uterine smooth muscle contraction and causes selective vasoconstriction. This is Neuromedin-U-25 from Rana temporaria (European common frog).